Reading from the N-terminus, the 232-residue chain is Putative B3 domain-containing protein Os11g0242900 (232 aa).

A DNA-binding region (TF-B3 1) is located at residues 1–51 (MTVELEKIAGSFFISKGWKTFVHRTGLLSGQYIRFQVLTPSKINVLLFDKK). Residues 92 to 121 (SHTSNKETSSDSRTESMTDIPSSSDNSGET) form a disordered region. Over residues 95 to 107 (SNKETSSDSRTES) the composition is skewed to basic and acidic residues. Polar residues predominate over residues 108–121 (MTDIPSSSDNSGET). The TF-B3 2 DNA-binding region spans 140 to 232 (DIKNYISIIG…PNVKITIDVL (93 aa)).

The protein localises to the nucleus. This chain is Putative B3 domain-containing protein Os11g0242900, found in Oryza sativa subsp. japonica (Rice).